Consider the following 287-residue polypeptide: Phosphatidylserine decarboxylase proenzyme (287 aa).

Residues aspartate 90, histidine 147, and serine 252 each act as charge relay system; for autoendoproteolytic cleavage activity in the active site. Residue serine 252 is the Schiff-base intermediate with substrate; via pyruvic acid; for decarboxylase activity of the active site. Position 252 is a pyruvic acid (Ser); by autocatalysis (serine 252).

It belongs to the phosphatidylserine decarboxylase family. PSD-B subfamily. Prokaryotic type I sub-subfamily. In terms of assembly, heterodimer of a large membrane-associated beta subunit and a small pyruvoyl-containing alpha subunit. It depends on pyruvate as a cofactor. Is synthesized initially as an inactive proenzyme. Formation of the active enzyme involves a self-maturation process in which the active site pyruvoyl group is generated from an internal serine residue via an autocatalytic post-translational modification. Two non-identical subunits are generated from the proenzyme in this reaction, and the pyruvate is formed at the N-terminus of the alpha chain, which is derived from the carboxyl end of the proenzyme. The autoendoproteolytic cleavage occurs by a canonical serine protease mechanism, in which the side chain hydroxyl group of the serine supplies its oxygen atom to form the C-terminus of the beta chain, while the remainder of the serine residue undergoes an oxidative deamination to produce ammonia and the pyruvoyl prosthetic group on the alpha chain. During this reaction, the Ser that is part of the protease active site of the proenzyme becomes the pyruvoyl prosthetic group, which constitutes an essential element of the active site of the mature decarboxylase.

The protein localises to the cell membrane. It catalyses the reaction a 1,2-diacyl-sn-glycero-3-phospho-L-serine + H(+) = a 1,2-diacyl-sn-glycero-3-phosphoethanolamine + CO2. It participates in phospholipid metabolism; phosphatidylethanolamine biosynthesis; phosphatidylethanolamine from CDP-diacylglycerol: step 2/2. Functionally, catalyzes the formation of phosphatidylethanolamine (PtdEtn) from phosphatidylserine (PtdSer). This chain is Phosphatidylserine decarboxylase proenzyme, found in Pseudomonas putida (strain ATCC 700007 / DSM 6899 / JCM 31910 / BCRC 17059 / LMG 24140 / F1).